The following is a 303-amino-acid chain: Pantothenate synthetase (303 aa).

Positions 1-21 (MIATGHGGAERRTTAGDGTAR) are disordered. ATP is bound at residue 48–55 (MGALHDGH). The Proton donor role is filled by H55. Q79 is a (R)-pantoate binding site. Q79 provides a ligand contact to beta-alanine. Position 165 to 168 (165 to 168 (GRKD)) interacts with ATP. Position 171 (Q171) interacts with (R)-pantoate. 202–205 (ASSR) provides a ligand contact to ATP.

Belongs to the pantothenate synthetase family. In terms of assembly, homodimer.

It localises to the cytoplasm. It catalyses the reaction (R)-pantoate + beta-alanine + ATP = (R)-pantothenate + AMP + diphosphate + H(+). Its pathway is cofactor biosynthesis; (R)-pantothenate biosynthesis; (R)-pantothenate from (R)-pantoate and beta-alanine: step 1/1. In terms of biological role, catalyzes the condensation of pantoate with beta-alanine in an ATP-dependent reaction via a pantoyl-adenylate intermediate. This is Pantothenate synthetase from Acidothermus cellulolyticus (strain ATCC 43068 / DSM 8971 / 11B).